Reading from the N-terminus, the 349-residue chain is tRNA pseudouridine synthase D (349 aa).

Phe27 serves as a coordination point for substrate. The active-site Nucleophile is Asp80. Asn129 is a binding site for substrate. A TRUD domain is found at 155 to 303 (GVPNYFGAQR…VEAARRAMLL (149 aa)). Residue Phe329 coordinates substrate.

This sequence belongs to the pseudouridine synthase TruD family.

The enzyme catalyses uridine(13) in tRNA = pseudouridine(13) in tRNA. Functionally, responsible for synthesis of pseudouridine from uracil-13 in transfer RNAs. The polypeptide is tRNA pseudouridine synthase D (Klebsiella pneumoniae subsp. pneumoniae (strain ATCC 700721 / MGH 78578)).